We begin with the raw amino-acid sequence, 89 residues long: DNA-directed RNA polymerase subunit omega (89 aa).

Belongs to the RNA polymerase subunit omega family. The RNAP catalytic core consists of 2 alpha, 1 beta, 1 beta' and 1 omega subunit. When a sigma factor is associated with the core the holoenzyme is formed, which can initiate transcription.

It catalyses the reaction RNA(n) + a ribonucleoside 5'-triphosphate = RNA(n+1) + diphosphate. Its function is as follows. Promotes RNA polymerase assembly. Latches the N- and C-terminal regions of the beta' subunit thereby facilitating its interaction with the beta and alpha subunits. This chain is DNA-directed RNA polymerase subunit omega (rpoZ), found in Pasteurella multocida (strain Pm70).